The sequence spans 42 residues: Photosystem II reaction center protein J (42 aa).

Residues 10–30 (IPLWLVGTVVGTLAIGLLAVF) form a helical membrane-spanning segment.

Belongs to the PsbJ family. PSII is composed of 1 copy each of membrane proteins PsbA, PsbB, PsbC, PsbD, PsbE, PsbF, PsbH, PsbI, PsbJ, PsbK, PsbL, PsbM, PsbT, PsbX, PsbY, PsbZ, Psb30/Ycf12, at least 3 peripheral proteins of the oxygen-evolving complex and a large number of cofactors. It forms dimeric complexes.

Its subcellular location is the plastid. The protein localises to the chloroplast thylakoid membrane. One of the components of the core complex of photosystem II (PSII). PSII is a light-driven water:plastoquinone oxidoreductase that uses light energy to abstract electrons from H(2)O, generating O(2) and a proton gradient subsequently used for ATP formation. It consists of a core antenna complex that captures photons, and an electron transfer chain that converts photonic excitation into a charge separation. The protein is Photosystem II reaction center protein J of Chlamydomonas reinhardtii (Chlamydomonas smithii).